The primary structure comprises 686 residues: MSKIRVHEYAKKHNISSKDLMTKLKEMNIEVSNHMTMLDDEVVNKLDNEYQAEKPSVADEFEVEEKVVRSKKNSNKKKKKGKGNEDKRQENFAGRQQTQTVETPDKITFSGSLTVGDLAKKLSKEPSEIIKKLFMLGIMATINQDLDKDTIELIANDYGIEVEEEVIVSETEFETFIDEQDDEENLKERPAVVTIMGHVDHGKTTLLDSIRNSKVTAGEAGGITQHIGAYQVELNDKKITFLDTPGHAAFTTMRARGAQVTDITIIVVAADDGVMPQTVEAINHAKAAGVPIIVAVNKMDKPAANPDRVMQELTEYELVPEAWGGDTIFVPISAIQGEGIDNLLEMILLISEVEEYKANPNRYATGTVIEAQLDKGKGTIATLLVQNGTLRVGDPIVVGTSFGRVRAMVSDIGRRVKVAGPSTPVEITGLNEVPQAGDRFMAFADEKKARQIGESRAQEALLAQRGEKSKLSLEDLFQQIQEGDVKEINLIVKADVQGSVEAMAASLRKIDVEGVKVKIIHTGVGAITESDIILASASNAIVIGFNVRPDVNAKRTAELENVDIRLHRIIYKVIEEIEAAMQGMLDPEFEEKVIGQAEVRQTFKVTKVGTIAGCYVTDGKITRDSGVRIIRDGVVIFEGQLDTLKRFKDDVKEVAQNYECGITIERYNDLKEGDIIEAYIMEEVKR.

Residues 54-105 (KPSVADEFEVEEKVVRSKKNSNKKKKKGKGNEDKRQENFAGRQQTQTVETPD) are disordered. Basic residues predominate over residues 69-81 (RSKKNSNKKKKKG). The tr-type G domain maps to 188–357 (ERPAVVTIMG…LLISEVEEYK (170 aa)). Positions 197–204 (GHVDHGKT) are G1. 197–204 (GHVDHGKT) provides a ligand contact to GTP. Residues 222–226 (GITQH) form a G2 region. The segment at 243–246 (DTPG) is G3. Residues 243–247 (DTPGH) and 297–300 (NKMD) contribute to the GTP site. Residues 297 to 300 (NKMD) are G4. The segment at 333–335 (SAI) is G5.

It belongs to the TRAFAC class translation factor GTPase superfamily. Classic translation factor GTPase family. IF-2 subfamily.

Its subcellular location is the cytoplasm. In terms of biological role, one of the essential components for the initiation of protein synthesis. Protects formylmethionyl-tRNA from spontaneous hydrolysis and promotes its binding to the 30S ribosomal subunits. Also involved in the hydrolysis of GTP during the formation of the 70S ribosomal complex. In Bacillus anthracis (strain A0248), this protein is Translation initiation factor IF-2.